Reading from the N-terminus, the 240-residue chain is Probable transcriptional regulatory protein Csal_0810 (240 aa).

Belongs to the TACO1 family.

Its subcellular location is the cytoplasm. The protein is Probable transcriptional regulatory protein Csal_0810 of Chromohalobacter salexigens (strain ATCC BAA-138 / DSM 3043 / CIP 106854 / NCIMB 13768 / 1H11).